We begin with the raw amino-acid sequence, 622 residues long: Basal cell adhesion molecule (622 aa).

Residues 1–25 (MEPPDARAGLLWLTFLLSGYSGAQA) form the signal peptide. Ig-like V-type domains lie at 26-135 (ELHV…SSVR) and 140-250 (PEDT…HTFR). The Extracellular portion of the chain corresponds to 26–541 (ELHVSVPPRV…GSVAPQTAQA (516 aa)). 3 disulfide bridges follow: C47/C118, C165/C230, and C284/C330. 3 consecutive Ig-like C2-type domains span residues 267 to 342 (PSTT…EEVQ), 356 to 435 (PLEL…QSFQ), and 442 to 532 (PELK…FHFG). N-linked (GlcNAc...) asparagine glycosylation is found at N314, N323, N370, and N377. Disulfide bonds link C378–C418 and C467–C516. A helical membrane pass occupies residues 542–562 (GVAVMAVAVSVGLLLLVVAAF). Over 563 to 622 (YCMRRKGRPGCCRRAEKGAPPAREPELSHSGSERPEHTGLLMGGPSGGGRGGSGGFGDEC) the chain is Cytoplasmic. A disordered region spans residues 574–622 (CRRAEKGAPPAREPELSHSGSERPEHTGLLMGGPSGGGRGGSGGFGDEC). Basic and acidic residues predominate over residues 575-599 (RRAEKGAPPAREPELSHSGSERPEH). 4 positions are modified to phosphoserine: S590, S592, S594, and S615. Positions 603–622 (LMGGPSGGGRGGSGGFGDEC) are enriched in gly residues.

As to quaternary structure, homodimer. Interacts with ITGA4:ITGB1. Interacts with spectrins SPTA1 and SPTB1. In terms of processing, epinephrine-stimulated phosphorylation of Ser-615 by PKA enhances adhesion to laminin. Ser-615 can also be phosphorylated by AKT1.

The protein localises to the cell membrane. Functionally, transmembrane glycoprotein that functions as both a receptor and an adhesion molecule playing a crucial role in cell adhesion, motility, migration and invasion. Extracellular domain enables binding to extracellular matrix proteins, such as laminin, integrin and other ligands while its intracellular domain interacts with cytoskeletal proteins like hemoglobin, facilitating cell signal transduction. Serves as a receptor for laminin alpha-5/LAMA5 to promote cell adhesion. Mechanistically, JAK2 induces BCAM phosphorylation and activates its adhesion to laminin by stimulating a Rap1/AKT signaling pathway in the absence of EPOR. The polypeptide is Basal cell adhesion molecule (Bcam) (Mus musculus (Mouse)).